Consider the following 511-residue polypeptide: Sulfate adenylyltransferase (511 aa).

Residues 1–167 (MPAPHGGILQ…LEAIQLPQHY (167 aa)) are N-terminal. The segment at 168–393 (DYPGLRKTPA…LRESNPPRPK (226 aa)) is catalytic. Gln195 serves as a coordination point for sulfate. ATP-binding positions include 195 to 198 (QTRN) and 289 to 292 (GRDH). Active-site residues include Thr196, Arg197, and Asn198. Arg197 contacts sulfate. Ala293 lines the sulfate pocket. Val331 is an ATP binding site. The segment at 394 to 511 (QGFSIVLGNS…FLEDNGFFVF (118 aa)) is required for oligomerization; adenylyl-sulfate kinase-like.

This sequence belongs to the sulfate adenylyltransferase family. Homohexamer. Dimer of trimers.

It is found in the cytoplasm. It carries out the reaction sulfate + ATP + H(+) = adenosine 5'-phosphosulfate + diphosphate. It participates in sulfur metabolism; hydrogen sulfide biosynthesis; sulfite from sulfate: step 1/3. Catalyzes the first intracellular reaction of sulfate assimilation, forming adenosine-5'-phosphosulfate (APS) from inorganic sulfate and ATP. Plays an important role in sulfate activation as a component of the biosynthesis pathway of sulfur-containing amino acids. The protein is Sulfate adenylyltransferase of Saccharomyces cerevisiae (strain ATCC 204508 / S288c) (Baker's yeast).